Here is a 103-residue protein sequence, read N- to C-terminus: Large ribosomal subunit protein bL21 (103 aa).

The protein belongs to the bacterial ribosomal protein bL21 family. As to quaternary structure, part of the 50S ribosomal subunit. Contacts protein L20.

Functionally, this protein binds to 23S rRNA in the presence of protein L20. The protein is Large ribosomal subunit protein bL21 of Nautilia profundicola (strain ATCC BAA-1463 / DSM 18972 / AmH).